We begin with the raw amino-acid sequence, 586 residues long: 2-succinyl-5-enolpyruvyl-6-hydroxy-3-cyclohexene-1-carboxylate synthase (586 aa).

The protein belongs to the TPP enzyme family. MenD subfamily. In terms of assembly, homodimer. It depends on Mg(2+) as a cofactor. The cofactor is Mn(2+). Requires thiamine diphosphate as cofactor.

The enzyme catalyses isochorismate + 2-oxoglutarate + H(+) = 5-enolpyruvoyl-6-hydroxy-2-succinyl-cyclohex-3-ene-1-carboxylate + CO2. The protein operates within quinol/quinone metabolism; 1,4-dihydroxy-2-naphthoate biosynthesis; 1,4-dihydroxy-2-naphthoate from chorismate: step 2/7. Its pathway is quinol/quinone metabolism; menaquinone biosynthesis. Functionally, catalyzes the thiamine diphosphate-dependent decarboxylation of 2-oxoglutarate and the subsequent addition of the resulting succinic semialdehyde-thiamine pyrophosphate anion to isochorismate to yield 2-succinyl-5-enolpyruvyl-6-hydroxy-3-cyclohexene-1-carboxylate (SEPHCHC). This chain is 2-succinyl-5-enolpyruvyl-6-hydroxy-3-cyclohexene-1-carboxylate synthase, found in Natronomonas pharaonis (strain ATCC 35678 / DSM 2160 / CIP 103997 / JCM 8858 / NBRC 14720 / NCIMB 2260 / Gabara) (Halobacterium pharaonis).